The sequence spans 426 residues: Gamma-glutamyl phosphate reductase (426 aa).

This sequence belongs to the gamma-glutamyl phosphate reductase family.

It localises to the cytoplasm. The catalysed reaction is L-glutamate 5-semialdehyde + phosphate + NADP(+) = L-glutamyl 5-phosphate + NADPH + H(+). Its pathway is amino-acid biosynthesis; L-proline biosynthesis; L-glutamate 5-semialdehyde from L-glutamate: step 2/2. Catalyzes the NADPH-dependent reduction of L-glutamate 5-phosphate into L-glutamate 5-semialdehyde and phosphate. The product spontaneously undergoes cyclization to form 1-pyrroline-5-carboxylate. The protein is Gamma-glutamyl phosphate reductase of Sorangium cellulosum (strain So ce56) (Polyangium cellulosum (strain So ce56)).